Here is a 421-residue protein sequence, read N- to C-terminus: Medium-chain specific acyl-CoA dehydrogenase, mitochondrial (421 aa).

A mitochondrion-targeting transit peptide spans methionine 1–serine 25. N6-acetyllysine; alternate occurs at positions 30 and 69. 2 positions are modified to N6-succinyllysine; alternate: lysine 30 and lysine 69. Position 79 is an N6-acetyllysine (lysine 79). FAD is bound at residue tyrosine 158–serine 167. Serine 167 contributes to the octanoyl-CoA binding site. Lysine 179 carries the N6-succinyllysine modification. Position 191 to 193 (tryptophan 191 to threonine 193) interacts with FAD. Residue lysine 212 is modified to N6-acetyllysine; alternate. Lysine 212 carries the N6-succinyllysine; alternate modification. Serine 216 lines the octanoyl-CoA pocket. 4 positions are modified to N6-acetyllysine; alternate: lysine 217, lysine 235, lysine 259, and lysine 271. Residues lysine 217, lysine 235, lysine 259, and lysine 271 each carry the N6-succinyllysine; alternate modification. The octanoyl-CoA site is built by aspartate 278 and arginine 281. Position 301 is an N6-acetyllysine (lysine 301). Residues arginine 306–threonine 308 and histidine 316–glutamine 317 each bind FAD. Residues arginine 349 and threonine 351 each coordinate octanoyl-CoA. Phosphothreonine is present on threonine 351. An FAD-binding site is contributed by glutamine 374 to glycine 378. Glutamate 401 contacts octanoyl-CoA. The Proton acceptor role is filled by glutamate 401. Glycine 402–glutamine 405 is a binding site for FAD.

This sequence belongs to the acyl-CoA dehydrogenase family. In terms of assembly, homotetramer. Interacts with the heterodimeric electron transfer flavoprotein ETF. Requires FAD as cofactor. Acetylated. Could occur at proximity of the cofactor-binding sites and reduce the catalytic activity. Could be deacetylated by SIRT3.

The protein resides in the mitochondrion matrix. The catalysed reaction is a medium-chain 2,3-saturated fatty acyl-CoA + oxidized [electron-transfer flavoprotein] + H(+) = a medium-chain (2E)-enoyl-CoA + reduced [electron-transfer flavoprotein]. It catalyses the reaction pentanoyl-CoA + oxidized [electron-transfer flavoprotein] + H(+) = (2E)-pentenoyl-CoA + reduced [electron-transfer flavoprotein]. The enzyme catalyses hexanoyl-CoA + oxidized [electron-transfer flavoprotein] + H(+) = (2E)-hexenoyl-CoA + reduced [electron-transfer flavoprotein]. It carries out the reaction octanoyl-CoA + oxidized [electron-transfer flavoprotein] + H(+) = (2E)-octenoyl-CoA + reduced [electron-transfer flavoprotein]. The catalysed reaction is decanoyl-CoA + oxidized [electron-transfer flavoprotein] + H(+) = (2E)-decenoyl-CoA + reduced [electron-transfer flavoprotein]. It catalyses the reaction dodecanoyl-CoA + oxidized [electron-transfer flavoprotein] + H(+) = (2E)-dodecenoyl-CoA + reduced [electron-transfer flavoprotein]. The enzyme catalyses tetradecanoyl-CoA + oxidized [electron-transfer flavoprotein] + H(+) = (2E)-tetradecenoyl-CoA + reduced [electron-transfer flavoprotein]. It carries out the reaction oxidized [electron-transfer flavoprotein] + hexadecanoyl-CoA + H(+) = (2E)-hexadecenoyl-CoA + reduced [electron-transfer flavoprotein]. Its pathway is lipid metabolism; mitochondrial fatty acid beta-oxidation. In terms of biological role, medium-chain specific acyl-CoA dehydrogenase is one of the acyl-CoA dehydrogenases that catalyze the first step of mitochondrial fatty acid beta-oxidation, an aerobic process breaking down fatty acids into acetyl-CoA and allowing the production of energy from fats. The first step of fatty acid beta-oxidation consists in the removal of one hydrogen from C-2 and C-3 of the straight-chain fatty acyl-CoA thioester, resulting in the formation of trans-2-enoyl-CoA. Electron transfer flavoprotein (ETF) is the electron acceptor that transfers electrons to the main mitochondrial respiratory chain via ETF-ubiquinone oxidoreductase (ETF dehydrogenase). Among the different mitochondrial acyl-CoA dehydrogenases, medium-chain specific acyl-CoA dehydrogenase acts specifically on acyl-CoAs with saturated 6 to 12 carbons long primary chains. In Mus musculus (Mouse), this protein is Medium-chain specific acyl-CoA dehydrogenase, mitochondrial.